We begin with the raw amino-acid sequence, 127 residues long: Phospholipase A2 homolog otoconin-22 (127 aa).

Asparagine 20 is a glycosylation site (N-linked (GlcNAc...) asparagine). Disulfide bonds link cysteine 26/cysteine 120, cysteine 28/cysteine 44, cysteine 43/cysteine 99, cysteine 49/cysteine 127, cysteine 50/cysteine 92, cysteine 59/cysteine 85, and cysteine 78/cysteine 90. N-linked (GlcNAc...) asparagine glycosylation occurs at asparagine 113.

Belongs to the phospholipase A2 family. Monomer. As to expression, otoconial membrane in the maculae of the saccule and utricle. Otoconia are composites of proteins and inorganic crystals formed in the peripheral portion of the vestibular system of vertebrates. The otoconial membranes contain small crystals of calcium carbonate known as otoliths (ear stones) if there is a single deposit or as otoconia (ear dust) if there are many. Each mineral polymorph of otoconia has a protein unique to that polymorph.

The protein localises to the secreted. Major protein of the aragonitic otoconia. It is unlikely that this protein has phospholipase A2 activity. In Xenopus laevis (African clawed frog), this protein is Phospholipase A2 homolog otoconin-22.